The sequence spans 890 residues: ATP-dependent DNA helicase DDX11 (890 aa).

In terms of domain architecture, Helicase ATP-binding spans 4–424 (KSGRFPFPFQ…KNLMYIKQIL (421 aa)). Position 39–46 (39–46 (SPTGTGKS)) interacts with ATP. Basic and acidic residues predominate over residues 71 to 85 (LLEGQKDSDVVKEKN). Disordered regions lie at residues 71 to 95 (LLEG…EPDW) and 176 to 199 (EYES…DDDD). [4Fe-4S] cluster contacts are provided by cysteine 246, cysteine 264, cysteine 294, and cysteine 329. The DEAH box motif lies at 372–375 (DEAH).

This sequence belongs to the DEAD box helicase family. DEAH subfamily. DDX11/CHL1 sub-subfamily. [4Fe-4S] cluster is required as a cofactor.

The protein localises to the nucleus. It localises to the nucleolus. Its subcellular location is the cytoplasm. The protein resides in the cytoskeleton. It is found in the spindle pole. The protein localises to the midbody. It localises to the microtubule organizing center. Its subcellular location is the centrosome. The enzyme catalyses Couples ATP hydrolysis with the unwinding of duplex DNA at the replication fork by translocating in the 5'-3' direction. This creates two antiparallel DNA single strands (ssDNA). The leading ssDNA polymer is the template for DNA polymerase III holoenzyme which synthesizes a continuous strand.. It catalyses the reaction ATP + H2O = ADP + phosphate + H(+). In terms of biological role, DNA-dependent ATPase and ATP-dependent DNA helicase that participates in various functions in genomic stability, including DNA replication, DNA repair and heterochromatin organization as well as in ribosomal RNA synthesis. Plays a role in DNA double-strand break (DSB) repair at the DNA replication fork during DNA replication recovery from DNA damage. Plays a role in the regulation of sister chromatid cohesion and mitotic chromosome segregation. Stimulates 5'-single-stranded DNA flap endonuclease activity of FEN1 in an ATP- and helicase-independent manner. Also plays a role in heterochromatin organization. Involved in rRNA transcription activation through binding to active hypomethylated rDNA gene loci by recruiting UBTF and the RNA polymerase Pol I transcriptional machinery. Plays a role in embryonic development. Associates with chromatin at DNA replication fork regions. Binds to single- and double-stranded DNAs. The polypeptide is ATP-dependent DNA helicase DDX11 (Danio rerio (Zebrafish)).